Consider the following 588-residue polypeptide: Serine/threonine-protein phosphatase 2A 65 kDa regulatory subunit A alpha isoform (588 aa).

14 HEAT repeats span residues 2-42, 44-80, 81-119, 158-196, 197-235, 236-274, 275-313, 315-352, 353-391, 393-430, 432-469, 470-508, 509-547, and 549-586; these read AMVD…ALGE, RTRK…FVGG, IEFA…QMKE, DVLK…TVES, TFLI…LLEP, QDCV…AVGP, DCTR…LLNP, LAIQ…ILGK, DSTI…VIGI, LLSQ…QLGI, FFDD…EFGP, EWAM…VMGS, EITC…IVDQ, and VVDK…STAA.

Belongs to the phosphatase 2A regulatory subunit A family. PP2A consists of a common heterodimeric core enzyme, composed of a 36 kDa catalytic subunit (subunit C) and a 65 kDa constant regulatory subunit (subunit A), that associates with a variety of regulatory subunits such as subunits B (the R2/B/PR55/B55, R3/B''/PR72/PR130/PR59 and R5/B'/B56 families) and the regulatory subunits TON2. Interacts with CYP20-1/ROC7. Also interacts with phosphatidic acid (PA), a lipid signaling molecule. Interacts with CHIP. Interacts with SIC/RON3. In terms of processing, ubiquitinated. CHIP-mediated ubiquitination enhances phosphatase activity after an abiotic stress such as low temperature or darkness. As to expression, mostly expressed in cell-dividing tissues such as apical meristems. Ubiquitous, with higher levels in roots and flowers (at protein level).

The protein localises to the cytoplasm. The protein resides in the cytosol. It is found in the nucleus. Functionally, the A subunit of protein phosphatase 2A serves as a scaffolding molecule to coordinate the assembly of the catalytic subunit and a variable regulatory B subunit. Seems to act as a positive regulator of PP2A catalytic activity. Confers resistance to phosphatase inhibitors such as okadaic acid and cantharidin. Involved during developmental process such as seedling and floral developments, root gravitropism, and stomatal opening regulation. Involved in the regulation of auxin efflux, especially during basipetal (tips to base) auxin transport in roots, and appears to contribute to the perception of auxin efflux inhibitors such as 1-N-naphthylphthalamic acid (NPA) and to semicarbazone I (substituted phenylsemicarbazone of 2-acetylarylcarboxylic acids) (SCB-I). Modulates the magnitude of ethylene response in the hypocotyl and stem, and functions as a general positive transducer of early ABA signaling. The holoenzyme composed of PP2AA1, PP2A4 and B'ZETA or B'ETA acts as a negative regulator of plant innate immunity by controlling BAK1 phosphorylation state and activation in surface-localized immune receptor complexes. The chain is Serine/threonine-protein phosphatase 2A 65 kDa regulatory subunit A alpha isoform (PP2AA1) from Arabidopsis thaliana (Mouse-ear cress).